Here is a 556-residue protein sequence, read N- to C-terminus: Dihydroxy-acid dehydratase (556 aa).

Cys47 contributes to the [2Fe-2S] cluster binding site. Asp79 contributes to the Mg(2+) binding site. Position 120 (Cys120) interacts with [2Fe-2S] cluster. 2 residues coordinate Mg(2+): Asp121 and Lys122. Residue Lys122 is modified to N6-carboxylysine. Cys192 serves as a coordination point for [2Fe-2S] cluster. Residue Glu444 participates in Mg(2+) binding. Residue Ser470 is the Proton acceptor of the active site.

The protein belongs to the IlvD/Edd family. Homodimer. It depends on [2Fe-2S] cluster as a cofactor. Mg(2+) serves as cofactor.

The enzyme catalyses (2R)-2,3-dihydroxy-3-methylbutanoate = 3-methyl-2-oxobutanoate + H2O. It carries out the reaction (2R,3R)-2,3-dihydroxy-3-methylpentanoate = (S)-3-methyl-2-oxopentanoate + H2O. It functions in the pathway amino-acid biosynthesis; L-isoleucine biosynthesis; L-isoleucine from 2-oxobutanoate: step 3/4. It participates in amino-acid biosynthesis; L-valine biosynthesis; L-valine from pyruvate: step 3/4. Functions in the biosynthesis of branched-chain amino acids. Catalyzes the dehydration of (2R,3R)-2,3-dihydroxy-3-methylpentanoate (2,3-dihydroxy-3-methylvalerate) into 2-oxo-3-methylpentanoate (2-oxo-3-methylvalerate) and of (2R)-2,3-dihydroxy-3-methylbutanoate (2,3-dihydroxyisovalerate) into 2-oxo-3-methylbutanoate (2-oxoisovalerate), the penultimate precursor to L-isoleucine and L-valine, respectively. The protein is Dihydroxy-acid dehydratase of Prochlorococcus marinus (strain NATL2A).